Here is a 375-residue protein sequence, read N- to C-terminus: tRNA-specific 2-thiouridylase MnmA (375 aa).

ATP contacts are provided by residues 9-16 (AMSGGVDS) and Leu35. Cys105 acts as the Nucleophile in catalysis. Cys105 and Cys201 are disulfide-bonded. Gly129 contributes to the ATP binding site. The tract at residues 151–153 (KNQ) is interaction with tRNA. Cys201 (cysteine persulfide intermediate) is an active-site residue. Positions 307 to 308 (RY) are interaction with tRNA.

Belongs to the MnmA/TRMU family.

The protein resides in the cytoplasm. It catalyses the reaction S-sulfanyl-L-cysteinyl-[protein] + uridine(34) in tRNA + AH2 + ATP = 2-thiouridine(34) in tRNA + L-cysteinyl-[protein] + A + AMP + diphosphate + H(+). In terms of biological role, catalyzes the 2-thiolation of uridine at the wobble position (U34) of tRNA, leading to the formation of s(2)U34. The chain is tRNA-specific 2-thiouridylase MnmA from Leptospira interrogans serogroup Icterohaemorrhagiae serovar Lai (strain 56601).